The sequence spans 173 residues: NADH-ubiquinone oxidoreductase chain 6 (173 aa).

The next 5 membrane-spanning stretches (helical) occupy residues 1-21, 27-47, 48-68, 87-107, and 139-159; these read MTYF…AVAS, YGVV…LSLG, VSFV…VVFV, VVGY…VGGF, and CGVG…FVVL.

This sequence belongs to the complex I subunit 6 family.

It is found in the mitochondrion membrane. The catalysed reaction is a ubiquinone + NADH + 5 H(+)(in) = a ubiquinol + NAD(+) + 4 H(+)(out). In terms of biological role, core subunit of the mitochondrial membrane respiratory chain NADH dehydrogenase (Complex I) that is believed to belong to the minimal assembly required for catalysis. Complex I functions in the transfer of electrons from NADH to the respiratory chain. The immediate electron acceptor for the enzyme is believed to be ubiquinone. The polypeptide is NADH-ubiquinone oxidoreductase chain 6 (MT-ND6) (Aethia cristatella (Crested auklet)).